Reading from the N-terminus, the 256-residue chain is DNA repair protein RecO (256 aa).

The protein belongs to the RecO family.

Involved in DNA repair and RecF pathway recombination. This Rhizobium johnstonii (strain DSM 114642 / LMG 32736 / 3841) (Rhizobium leguminosarum bv. viciae) protein is DNA repair protein RecO.